The following is a 30-amino-acid chain: Snake venom serine protease (30 aa).

The Peptidase S1 domain occupies 1-30; sequence VIGGDECNINEHRFLVALYDPDGFLSGGIL.

Belongs to the peptidase S1 family. Snake venom subfamily. Monomer. Post-translationally, N-Glycosylated. As to expression, expressed by the venom gland.

The protein resides in the secreted. With respect to regulation, inhibited by diisopropylfluorophosphate (DFP). Its function is as follows. Snake venom serine protease that catalyzes the hydrolysis of arginine esters, kallikrein substrates Pro-Phe-Arg-MCA and Z-Phe-Arg-MCA. Cleaves kininogen analogs to release bradykinin. Induces contraction of the isolated rat uterus directly at high concentrations, but provokes more forceful contractions when injected in presence of bovine plasma. Shows capillary permeability-increasing activity and hypotensive activity on the anesthetized rat. The protein is Snake venom serine protease of Crotalus viridis viridis (Prairie rattlesnake).